Reading from the N-terminus, the 692-residue chain is MAKRLLESSQNDQANRKNSKIEKKEVSFYEEEETDDSFDSFYQDEEDDLSDIDWEEVSLDGSLTVTFGNIRRDREKVSKYKRKHNKKAFNYQRLKYGLHLIMIPFMLFLLKSRMKWIDDERLNRRLRRSVPKLIGKKFKDWDVRDPAFKMDSLRTLLLGLVLWFRSNYKMNSNGIRQNFNRLQYLIKYADNQNENSISESTYKKVLENQQEFYGNRPLINHGVEDIRKMAKRKMANRDILTLFFFIILENVLPGPKKLYLCFALPLHDYDIRCNKVKWQIEHGIGKVPNRFDSDLIQPYFWIELEVPTLSDGELYIIDPIAHLGEREMVLKTREDQFVPTYQPSVDMKYNLNQKFHYVVRINHAEKVLQDVSPRYVPNVCYRYFELSESSPILKSKHYTSYQYLSKWLKVLNKKKASVHHYAIMKKIALTNFTLPKSVTEIKRTDNFVIPSLLKSNEVLKACAKQAATFTKGDNSQEPIFWRRDVIQLKSKQHWAILGRSILPNAQPLKRKKYLPMRERMVRNLDKYVIKELFSYEQTMKSPKYPSTYCDHLGQEHVITDLSHYKNKFGNIEIYSKETKPDGFELIPLSKEVDIKCLIKEYNKGKRKMQKIKYLDVVSGFDFKQKKGHAIPKIESILVKETDYKAVQLLKQQTKVLLGLSFWDILLRKLRVNDRLNAEYGNVGNNEETLDDH.

A disordered region spans residues 1-38; it reads MAKRLLESSQNDQANRKNSKIEKKEVSFYEEEETDDSF. A compositionally biased stretch (acidic residues) spans 28-38; it reads FYEEEETDDSF.

It belongs to the XPC family.

It localises to the nucleus. Functionally, involved in nucleotide excision repair (NER) of damaged ribosomal DNA (rDNA). Required for the repair of the RNA polymerase I-transcribed strand of rDNA. This Saccharomyces cerevisiae (strain ATCC 204508 / S288c) (Baker's yeast) protein is DNA repair protein RAD34 (RAD34).